Consider the following 276-residue polypeptide: Sulfur carrier protein FdhD (276 aa).

The active-site Cysteine persulfide intermediate is the Cys120.

Belongs to the FdhD family.

The protein localises to the cytoplasm. In terms of biological role, required for formate dehydrogenase (FDH) activity. Acts as a sulfur carrier protein that transfers sulfur from IscS to the molybdenum cofactor prior to its insertion into FDH. The sequence is that of Sulfur carrier protein FdhD from Bordetella parapertussis (strain 12822 / ATCC BAA-587 / NCTC 13253).